The chain runs to 318 residues: Curved DNA-binding protein (318 aa).

Residues 5–69 (DYYKILGVEP…QKRAEFDEIR (65 aa)) form the J domain. The tract at residues 111 to 130 (GGGNPFGGARQQQRSAGRRG) is disordered.

It localises to the cytoplasm. The protein resides in the nucleoid. Functionally, DNA-binding protein that preferentially recognizes a curved DNA sequence. It is probably a functional analog of DnaJ; displays overlapping activities with DnaJ, but functions under different conditions, probably acting as a molecular chaperone in an adaptive response to environmental stresses other than heat shock. Lacks autonomous chaperone activity; binds native substrates and targets them for recognition by DnaK. Its activity is inhibited by the binding of CbpM. This chain is Curved DNA-binding protein, found in Pseudomonas putida (strain GB-1).